The primary structure comprises 164 residues: Crossover junction endodeoxyribonuclease RuvC (164 aa).

Active-site residues include D7, E67, and D139. Mg(2+) is bound by residues D7, E67, and D139.

It belongs to the RuvC family. Homodimer which binds Holliday junction (HJ) DNA. The HJ becomes 2-fold symmetrical on binding to RuvC with unstacked arms; it has a different conformation from HJ DNA in complex with RuvA. In the full resolvosome a probable DNA-RuvA(4)-RuvB(12)-RuvC(2) complex forms which resolves the HJ. Mg(2+) is required as a cofactor.

The protein localises to the cytoplasm. The enzyme catalyses Endonucleolytic cleavage at a junction such as a reciprocal single-stranded crossover between two homologous DNA duplexes (Holliday junction).. The RuvA-RuvB-RuvC complex processes Holliday junction (HJ) DNA during genetic recombination and DNA repair. Endonuclease that resolves HJ intermediates. Cleaves cruciform DNA by making single-stranded nicks across the HJ at symmetrical positions within the homologous arms, yielding a 5'-phosphate and a 3'-hydroxyl group; requires a central core of homology in the junction. The consensus cleavage sequence is 5'-(A/T)TT(C/G)-3'. Cleavage occurs on the 3'-side of the TT dinucleotide at the point of strand exchange. HJ branch migration catalyzed by RuvA-RuvB allows RuvC to scan DNA until it finds its consensus sequence, where it cleaves and resolves the cruciform DNA. The chain is Crossover junction endodeoxyribonuclease RuvC from Geobacter sulfurreducens (strain ATCC 51573 / DSM 12127 / PCA).